The following is a 365-amino-acid chain: Mitogen-activated protein kinase 13 (365 aa).

The Protein kinase domain occupies 25–308 (YVSPTHVGSG…AAQALTHPFF (284 aa)). Residue 31–39 (VGSGAYGSV) coordinates ATP. Serine 47 carries the post-translational modification Phosphoserine. Lysine 54 is an ATP binding site. Aspartate 150 acts as the Proton acceptor in catalysis. Threonine 180 carries the phosphothreonine; by MAP2K3, MAP2K4, MAP2K6 and MAP2K7 modification. Residues 180–182 (TGY) carry the TXY motif. Tyrosine 182 carries the phosphotyrosine; by MAP2K3, MAP2K4, MAP2K6 and MAP2K7 modification. Serine 350 is modified (phosphoserine).

Belongs to the protein kinase superfamily. CMGC Ser/Thr protein kinase family. MAP kinase subfamily. In terms of assembly, interacts with MAPK8IP2. Requires Mg(2+) as cofactor. In terms of processing, dually phosphorylated on Thr-180 and Tyr-182 by MAP2K3/MKK3, MAP2K4/MKK4, MAP2K6/MKK6 and MAP2K7/MKK7, which activates the enzyme. Dephosphorylated by dual specificity phosphatase DUSP1. As to expression, expressed in testes, pancreas, small intestine, lung and kidney. Abundant in macrophages, also present in neutrophils, CD4+ T-cells, and endothelial cells.

The catalysed reaction is L-seryl-[protein] + ATP = O-phospho-L-seryl-[protein] + ADP + H(+). It catalyses the reaction L-threonyl-[protein] + ATP = O-phospho-L-threonyl-[protein] + ADP + H(+). With respect to regulation, activated by phosphorylation on threonine and tyrosine by dual specificity kinases, MAP2K3/MKK3, MAP2K6/MKK6, MAP2K4/MKK4 and MAP2K7/MKK7. Activation by ultraviolet radiation, hyperosmotic shock, anisomycin or by TNF-alpha is mediated by MAP2K3/MKK3. Inhibited by dual specificity phosphatase DUSP1. Functionally, serine/threonine kinase which acts as an essential component of the MAP kinase signal transduction pathway. MAPK13 is one of the four p38 MAPKs which play an important role in the cascades of cellular responses evoked by extracellular stimuli such as pro-inflammatory cytokines or physical stress leading to direct activation of transcription factors such as ELK1 and ATF2. Accordingly, p38 MAPKs phosphorylate a broad range of proteins and it has been estimated that they may have approximately 200 to 300 substrates each. MAPK13 is one of the less studied p38 MAPK isoforms. Some of the targets are downstream kinases such as MAPKAPK2, which are activated through phosphorylation and further phosphorylate additional targets. Plays a role in the regulation of protein translation by phosphorylating and inactivating EEF2K. Involved in cytoskeletal remodeling through phosphorylation of MAPT and STMN1. Mediates UV irradiation induced up-regulation of the gene expression of CXCL14. Plays an important role in the regulation of epidermal keratinocyte differentiation, apoptosis and skin tumor development. Phosphorylates the transcriptional activator MYB in response to stress which leads to rapid MYB degradation via a proteasome-dependent pathway. MAPK13 also phosphorylates and down-regulates PRKD1 during regulation of insulin secretion in pancreatic beta cells. The chain is Mitogen-activated protein kinase 13 (MAPK13) from Homo sapiens (Human).